The following is a 367-amino-acid chain: DNA replication and repair protein RecF (367 aa).

30 to 37 (GANGSGKT) is a binding site for ATP.

This sequence belongs to the RecF family.

It localises to the cytoplasm. Its function is as follows. The RecF protein is involved in DNA metabolism; it is required for DNA replication and normal SOS inducibility. RecF binds preferentially to single-stranded, linear DNA. It also seems to bind ATP. In Pseudomonas savastanoi pv. phaseolicola (strain 1448A / Race 6) (Pseudomonas syringae pv. phaseolicola (strain 1448A / Race 6)), this protein is DNA replication and repair protein RecF.